A 241-amino-acid chain; its full sequence is Ribonuclease PH (241 aa).

Residues Arg-89 and 127-129 (GTR) contribute to the phosphate site.

The protein belongs to the RNase PH family. As to quaternary structure, homohexameric ring arranged as a trimer of dimers.

It carries out the reaction tRNA(n+1) + phosphate = tRNA(n) + a ribonucleoside 5'-diphosphate. Functionally, phosphorolytic 3'-5' exoribonuclease that plays an important role in tRNA 3'-end maturation. Removes nucleotide residues following the 3'-CCA terminus of tRNAs; can also add nucleotides to the ends of RNA molecules by using nucleoside diphosphates as substrates, but this may not be physiologically important. Probably plays a role in initiation of 16S rRNA degradation (leading to ribosome degradation) during starvation. The polypeptide is Ribonuclease PH (Xanthomonas axonopodis pv. citri (strain 306)).